The primary structure comprises 121 residues: UPF0102 protein VP0448 (121 aa).

The protein belongs to the UPF0102 family.

This is UPF0102 protein VP0448 from Vibrio parahaemolyticus serotype O3:K6 (strain RIMD 2210633).